A 237-amino-acid chain; its full sequence is Uridylate kinase (237 aa).

Residue 9–12 (KLSG) coordinates ATP. Residue G51 participates in UMP binding. G52 and R56 together coordinate ATP. UMP is bound by residues D71 and 132-139 (CGNPFFTT). Positions 159, 165, and 168 each coordinate ATP.

Belongs to the UMP kinase family. As to quaternary structure, homohexamer.

The protein resides in the cytoplasm. It catalyses the reaction UMP + ATP = UDP + ADP. The protein operates within pyrimidine metabolism; CTP biosynthesis via de novo pathway; UDP from UMP (UMPK route): step 1/1. Its activity is regulated as follows. Inhibited by UTP. In terms of biological role, catalyzes the reversible phosphorylation of UMP to UDP. This chain is Uridylate kinase, found in Prochlorococcus marinus (strain NATL1A).